Reading from the N-terminus, the 359-residue chain is ATP-dependent (S)-NAD(P)H-hydrate dehydratase (359 aa).

The 290-residue stretch at 61–350 (LLEEARKVVP…SEINSVFVNN (290 aa)) folds into the YjeF C-terminal domain. (6S)-NADPHX contacts are provided by residues Gly161 and 214–220 (NVVEFQR). ATP contacts are provided by residues 256-260 (KGEVD) and 275-284 (GSPRRCGGQG). Asp285 contributes to the (6S)-NADPHX binding site.

Belongs to the NnrD/CARKD family. Requires Mg(2+) as cofactor.

It carries out the reaction (6S)-NADHX + ATP = ADP + phosphate + NADH + H(+). The enzyme catalyses (6S)-NADPHX + ATP = ADP + phosphate + NADPH + H(+). In terms of biological role, catalyzes the dehydration of the S-form of NAD(P)HX at the expense of ATP, which is converted to ADP. Together with NAD(P)HX epimerase, which catalyzes the epimerization of the S- and R-forms, the enzyme allows the repair of both epimers of NAD(P)HX, a damaged form of NAD(P)H that is a result of enzymatic or heat-dependent hydration. The chain is ATP-dependent (S)-NAD(P)H-hydrate dehydratase from Ciona intestinalis (Transparent sea squirt).